We begin with the raw amino-acid sequence, 295 residues long: ATP synthase subunit a (295 aa).

Transmembrane regions (helical) follow at residues 41–61 (KWSA…WLGF), 101–121 (YLTI…IPVA), 129–149 (IALP…VGIR), 161–181 (LVPA…IEFV), 191–211 (LAIR…VFAL), 222–242 (FVFG…ELMI), and 244–264 (VLQA…AISS).

The protein belongs to the ATPase A chain family. In terms of assembly, F-type ATPases have 2 components, CF(1) - the catalytic core - and CF(0) - the membrane proton channel. CF(1) has five subunits: alpha(3), beta(3), gamma(1), delta(1), epsilon(1). CF(0) has three main subunits: a(1), b(2) and c(9-12). The alpha and beta chains form an alternating ring which encloses part of the gamma chain. CF(1) is attached to CF(0) by a central stalk formed by the gamma and epsilon chains, while a peripheral stalk is formed by the delta and b chains.

Its subcellular location is the cell membrane. In terms of biological role, key component of the proton channel; it plays a direct role in the translocation of protons across the membrane. This is ATP synthase subunit a from Parafrankia sp. (strain EAN1pec).